A 372-amino-acid polypeptide reads, in one-letter code: Solute carrier family 35 member F6 (372 aa).

The signal sequence occupies residues 1–18 (MAWTKYQLFLAGLMLVTG). Transmembrane regions (helical) follow at residues 48–68 (FVQAVGMFLGEFSCLAAFYLL) and 89–109 (LLFLPPALCDMTGTSIMYVAL). An EamA domain is found at 105–160 (MYVALNMTSASSFQMLRGAVIIFTGLFSVAFLDRRLVPSQWLGILITIAGLVVVGL). An N-linked (GlcNAc...) asparagine glycan is attached at asparagine 110. 7 helical membrane passes run 116–136 (SFQMLRGAVIIFTGLFSVAFL), 145–165 (WLGILITIAGLVVVGLADLLS), 176–196 (VITGDLLIIMAQIIIAIQMVL), 211–231 (AVGIEGFFGFVILSLLLVPMY), 261–281 (LIALALLGNISSIAFFNFSGI), 293–312 (MVLDTLRTVVIWAFTLALGW), and 320–336 (ILGFLILLMGTALYNGL). A Phosphothreonine modification is found at threonine 366.

The protein belongs to the SLC35F solute transporter family. As to quaternary structure, interacts with SLC25A5.

It localises to the mitochondrion. The protein localises to the lysosome membrane. In terms of biological role, involved in the maintenance of mitochondrial membrane potential in pancreatic ductal adenocarcinoma (PDAC) cells. Promotes pancreatic ductal adenocarcinoma (PDAC) cell growth. May play a role as a nucleotide-sugar transporter. The chain is Solute carrier family 35 member F6 (Slc35f6) from Rattus norvegicus (Rat).